A 149-amino-acid chain; its full sequence is Low molecular weight protein-tyrosine-phosphatase Wzb (149 aa).

Cys-9 acts as the Nucleophile in catalysis. Arg-15 is an active-site residue. Asp-115 serves as the catalytic Proton donor.

Belongs to the low molecular weight phosphotyrosine protein phosphatase family.

It catalyses the reaction O-phospho-L-tyrosyl-[protein] + H2O = L-tyrosyl-[protein] + phosphate. It functions in the pathway glycan metabolism; exopolysaccharide biosynthesis. Its function is as follows. Dephosphorylates Wzc. Required for the extracellular polysaccharide colanic acid synthesis. Probably involved in the export of colanic acid from the cell to medium. Involved in protection of cells against contact-dependent growth inhibition (CDI). This chain is Low molecular weight protein-tyrosine-phosphatase Wzb (wzb), found in Salmonella typhi.